A 394-amino-acid chain; its full sequence is Upstream-binding factor 1-like protein 1 (394 aa).

The segment at residues 101 to 169 (PKRPLTAYLR…DFQKKMRQFK (69 aa)) is a DNA-binding region (HMG box 1). Basic residues predominate over residues 167-180 (QFKKRHPVSGHPKK). Residues 167–197 (QFKKRHPVSGHPKKSVVPQSHPTKVPTKSQG) form a disordered region. Positions 183–197 (VPQSHPTKVPTKSQG) are enriched in polar residues. The segment at residues 225–291 (RKPPMNAYHK…QYRVKLDLWL (67 aa)) is a DNA-binding region (HMG box 2). A disordered region spans residues 305 to 394 (AKATCGKRKN…SDSSSTDEDD (90 aa)).

The protein localises to the cytoplasm. It is found in the nucleus. Its function is as follows. Essential for proliferation of the inner cell mass and trophectodermal cells in peri-implantation development. The chain is Upstream-binding factor 1-like protein 1 from Mus musculus (Mouse).